The sequence spans 866 residues: Glycoprotein gp2 (866 aa).

Residues Met-1–Thr-25 form the signal peptide. Disordered regions lie at residues Thr-24–Thr-185 and Thr-319–Gln-619. Residue Asn-48 is glycosylated (N-linked (GlcNAc...) asparagine; by host). Residues Thr-319–Thr-442 are compositionally biased toward low complexity. The span at Ala-443–Phe-463 shows a compositional bias: polar residues. 2 stretches are compositionally biased toward low complexity: residues Thr-464–Thr-499 and Thr-514–Pro-526. A glycan (N-linked (GlcNAc...) asparagine; by host) is linked at Asn-518. A compositionally biased stretch (polar residues) spans Phe-535–Ala-561. Residues His-564–Gly-574 show a composition bias toward basic residues. N-linked (GlcNAc...) asparagine; by host glycans are attached at residues Asn-611 and Asn-659. The chain crosses the membrane as a helical span at residues Phe-835 to Tyr-855.

The protein resides in the virion membrane. Virulence factor. This chain is Glycoprotein gp2, found in Equus caballus (Horse).